Here is a 429-residue protein sequence, read N- to C-terminus: [LysW]-aminoadipate semialdehyde transaminase (429 aa).

Residues glycine 112 to threonine 113 and phenylalanine 139 each bind pyridoxal 5'-phosphate. Arginine 142 serves as a coordination point for substrate. Residue aspartate 226–glutamine 229 participates in pyridoxal 5'-phosphate binding. Position 255 is an N6-(pyridoxal phosphate)lysine (lysine 255). Position 283 (threonine 283) interacts with substrate. Position 284 (threonine 284) interacts with pyridoxal 5'-phosphate. Residues leucine 408–glutamate 429 form a disordered region. Residues glutamine 411 to glutamate 429 show a composition bias toward low complexity.

This sequence belongs to the class-III pyridoxal-phosphate-dependent aminotransferase family. LysJ subfamily. In terms of assembly, homodimer. Pyridoxal 5'-phosphate is required as a cofactor.

It is found in the cytoplasm. It carries out the reaction [amino-group carrier protein]-C-terminal-gamma-(L-lysyl)-L-glutamate + 2-oxoglutarate = [amino-group carrier protein]-C-terminal-N-(1-carboxy-5-oxopentan-1-yl)-L-glutamine + L-glutamate. Its pathway is amino-acid biosynthesis; L-lysine biosynthesis via AAA pathway; L-lysine from L-alpha-aminoadipate (Thermus route): step 4/5. Its function is as follows. Catalyzes the transfer of the amino group of L-glutamate to [LysW]-aminoadipate 6-semialdehyde, generating [LysW]-gamma-L-lysine. This is [LysW]-aminoadipate semialdehyde transaminase from Deinococcus radiodurans (strain ATCC 13939 / DSM 20539 / JCM 16871 / CCUG 27074 / LMG 4051 / NBRC 15346 / NCIMB 9279 / VKM B-1422 / R1).